The primary structure comprises 131 residues: Small ribosomal subunit protein uS11 (131 aa).

Over residues 1–15 the composition is skewed to basic residues; that stretch reads MAAQKVKKTRRRKER. The disordered stretch occupies residues 1 to 23; the sequence is MAAQKVKKTRRRKERKNVEHGAA.

It belongs to the universal ribosomal protein uS11 family. In terms of assembly, part of the 30S ribosomal subunit. Interacts with proteins S7 and S18. Binds to IF-3.

Functionally, located on the platform of the 30S subunit, it bridges several disparate RNA helices of the 16S rRNA. Forms part of the Shine-Dalgarno cleft in the 70S ribosome. The sequence is that of Small ribosomal subunit protein uS11 from Clostridium perfringens (strain 13 / Type A).